We begin with the raw amino-acid sequence, 1311 residues long: MSRRKQAKPRSVKVEEGEASDFSLAWDSSVAAAGGLEGESECDRKSSRALEDRNSVTSQEERNEDDEDVEDESIYTCDHCQQDFESLADLTDHRAHRCPGDGDDDPQLSWVASSPSSKDVASPTQMIGDGCDLGLGEEEGGTGLPYPCQFCDKSFIRLSYLKRHEQIHSDKLPFKCTFCSRLFKHKRSRDRHIKLHTGDKKYHCHECEAAFSRRDHLKIHLKTHSSSKPFKCSVCKRGFSSTSSLQSHMQAHKKNKEHLAKSEKEAKKDDFMCDYCEDTFSQTEELEKHVLTLHPQLSEKADLQCIHCPEVFVDESTLLAHIHQAHANQKHKCPMCPEQFSSVEGVYCHLDSHRQPDSSNHSVSPDPVLGSVASMSSATPDSTPDPVLGSVASMSSATPDSSASVERGSTPDSTLKPLRGQKKMRDDGQSWSKVVYSCPYCSKRDFTSLAVLEIHLKTIHADKPQQSHTCQICLDSMPTLYNLNEHVRKLHKSHAYPVMQFGNISAFHCNYCPEMFADINSLQEHIRVSHCGPNANPPDGNNAFFCNQCSMGFLTESSLTEHIQQAHCSVGSTKLESPVIQPTQSFMEVYSCPYCTNSPIFGSILKLTKHIKENHKNIPLAHSKKSKAEQSPVSSDVEVSSPKRQRLSGSANSISNGEYPCNQCDLKFSNFESFQTHLKLHLELLLRKQACPQCKEDFDSQESLLQHLTVHYMTTSTHYVCESCDKQFSSVDDLQKHLLDMHTFVLYHCTLCQEVFDSKVSIQVHLAVKHSNEKKMYRCTACNWDFRKEADLQVHVKHSHLGNPAKAHKCIFCGETFSTEVELQCHITTHSKKYNCRFCSKAFHAVLLLEKHLREKHCVFDPAAENGTANGVPPTSTKKAEPADLQGMLLKNPEAPNSHEASEDDVDASEPMYGCDICGAAYTMEVLLQNHRLRDHNIRPGEDDGSRKKAEFIKGSHKCNVCSRTFFSENGLREHLQTHRGPAKHYMCPICGERFPSLLTLTEHKVTHSKSLDTGTCRICKMPLQSEEEFIEHCQMHPDLRNSLTGFRCVVCMQTVTSTLELKIHGTFHMQKLAGSSAASSPNGQGLQKLYKCALCLKEFRSKQDLVRLDVNGLPYGLCAGCMARSANGQVGGLAPPEPADRPCAGLRCPECNVKFESAEDLESHMQVDHRDLTPETSGPRKGAQTSPVPRKKTYQCIKCQMTFENEREIQIHVANHMIEEGINHECKLCNQMFDSPAKLLCHLIEHSFEGMGGTFKCPVCFTVFVQANKLQQHIFAVHGQEDKIYDCSQCPQKFFFQTELQNHTMSQHAQ.

Positions 1-11 (MSRRKQAKPRS) are enriched in basic residues. 3 disordered regions span residues 1 to 21 (MSRR…EASD), 34 to 70 (GGLE…EDVE), and 95 to 123 (AHRC…VASP). Positions 41–54 (ECDRKSSRALEDRN) are enriched in basic and acidic residues. S55 and S58 each carry phosphoserine. The segment at 75–101 (YTCDHCQQDFESLADLTDHRAHRCPGD) adopts a C2H2-type 1; degenerate zinc-finger fold. A compositionally biased stretch (polar residues) spans 110 to 123 (WVASSPSSKDVASP). C2H2-type zinc fingers lie at residues 146–168 (YPCQ…EQIH), 174–196 (FKCT…IKLH), 202–224 (YHCH…LKTH), 230–252 (FKCS…MQAH), 271–294 (FMCD…LTLH), 303–326 (LQCI…HQAH), and 331–353 (HKCP…LDSH). The tract at residues 354–426 (RQPDSSNHSV…PLRGQKKMRD (73 aa)) is disordered. Residues 373–382 (ASMSSATPDS) show a composition bias toward polar residues. The span at 390-404 (SVASMSSATPDSSAS) shows a compositional bias: low complexity. A C2H2-type 9; degenerate zinc finger spans residues 436–460 (YSCPYCSKRDFTSLAVLEIHLKTIH). 3 C2H2-type zinc fingers span residues 468 to 491 (HTCQ…RKLH), 507 to 530 (FHCN…RVSH), and 544 to 567 (FFCN…QQAH). The C2H2-type 13; atypical zinc-finger motif lies at 590-615 (YSCPYCTNSPIFGSILKLTKHIKENH). Residues 617 to 654 (NIPLAHSKKSKAEQSPVSSDVEVSSPKRQRLSGSANSI) are disordered. Position 631 is a phosphoserine (S631). The span at 631 to 642 (SPVSSDVEVSSP) shows a compositional bias: low complexity. C2H2-type zinc fingers lie at residues 659–681 (YPCN…LKLH), 689–711 (QACP…LTVH), 719–742 (YVCE…LDMH), 747–770 (YHCT…AVKH), 777–800 (YRCT…KHSH), 808–830 (HKCI…ITTH), and 834–857 (YNCR…REKH). Residues 913-935 (YGCDICGAAYTMEVLLQNHRLRD) form a C2H2-type 21; degenerate zinc finger. 3 consecutive C2H2-type zinc fingers follow at residues 957–979 (HKCN…LQTH), 986–1008 (YMCP…KVTH), and 1047–1069 (FRCV…GTFH). Phosphoserine is present on S1081. The C2H2-type 25; degenerate zinc-finger motif lies at 1091 to 1109 (YKCALCLKEFRSKQDLVRL). 5 C2H2-type zinc fingers span residues 1147–1170 (LRCP…QVDH), 1195–1217 (YQCI…VANH), 1225–1247 (HECK…LIEH), 1256–1279 (FKCP…FAVH), and 1286–1309 (YDCS…MSQH). Over residues 1163–1174 (ESHMQVDHRDLT) the composition is skewed to basic and acidic residues. The tract at residues 1163–1190 (ESHMQVDHRDLTPETSGPRKGAQTSPVP) is disordered.

Belongs to the krueppel C2H2-type zinc-finger protein family. Homodimer. Interacts with PARP1, SMAD1 and SMAD4. Interacts with EBF1. Interacts with CEP290. In terms of tissue distribution, expressed in brain, eye, olfactory epithelium, spleen and heart. Expressed in the basal layer, consisting of neural precursor cells and immature sensory neurons of the olfactory epithelium, but not in the mature receptor cells.

It localises to the nucleus. Functionally, transcription factor that can both act as an activator or a repressor depending on the context. Plays a central role in BMP signaling and olfactory neurogenesis. Associates with SMADs in response to BMP2 leading to activate transcription of BMP target genes. Acts as a transcriptional repressor via its interaction with EBF1, a transcription factor involved in terminal olfactory receptor neurons differentiation; this interaction preventing EBF1 to bind DNA and activate olfactory-specific genes. Involved in olfactory neurogenesis by participating in a developmental switch that regulates the transition from differentiation to maturation in olfactory receptor neurons. Controls proliferation and differentiation of neural precursors in cerebellar vermis formation. The chain is Zinc finger protein 423 (Znf423) from Rattus norvegicus (Rat).